The chain runs to 161 residues: Lipoprotein signal peptidase (161 aa).

3 helical membrane-spanning segments follow: residues 9-29, 63-83, and 88-108; these read ISLLMTIIVLVFDQVSKWLIT, KMLFFYIITIIILIVLVIFYI, and FNLFMQVAISLLFAGALGNFI. Residues Asp118 and Asp136 contribute to the active site. A helical membrane pass occupies residues 131-151; that stretch reads IFNIADSSLTIGVIFVIIALI.

Belongs to the peptidase A8 family.

The protein localises to the cell membrane. It catalyses the reaction Release of signal peptides from bacterial membrane prolipoproteins. Hydrolyzes -Xaa-Yaa-Zaa-|-(S,diacylglyceryl)Cys-, in which Xaa is hydrophobic (preferably Leu), and Yaa (Ala or Ser) and Zaa (Gly or Ala) have small, neutral side chains.. It functions in the pathway protein modification; lipoprotein biosynthesis (signal peptide cleavage). This protein specifically catalyzes the removal of signal peptides from prolipoproteins. The protein is Lipoprotein signal peptidase of Staphylococcus epidermidis (strain ATCC 12228 / FDA PCI 1200).